The primary structure comprises 325 residues: Hexaprenyl-diphosphate synthase large subunit ((2E,6E)-farnesyl-diphosphate specific) (325 aa).

Residues Lys45, Arg48, and His77 each contribute to the isopentenyl diphosphate site. Positions 84, 88, and 93 each coordinate all-trans-hexaprenyl diphosphate. Mg(2+) contacts are provided by Asp84 and Asp88. Residue Arg94 participates in isopentenyl diphosphate binding. Residues Lys170, Thr171, and Gln208 each contribute to the all-trans-hexaprenyl diphosphate site.

The protein belongs to the FPP/GGPP synthase family. As to quaternary structure, dimer of heterodimer or heterotetramer composed of a small (Hexs-a) and large (Hexs-B) subunit. It depends on Mg(2+) as a cofactor.

It carries out the reaction 3 isopentenyl diphosphate + (2E,6E)-farnesyl diphosphate = all-trans-hexaprenyl diphosphate + 3 diphosphate. Catalyzes the condensation of three molecules of isopentenyl diphosphate with farnesyl diphosphate (FPP) to yield (all-E)-hexaprenyl diphosphate (HexPP; C30), the precursor of the prenyl side chain of menaquinone-6. Large subunit Hexs-B catalyzes the condensation reaction and the final product chain length is cooperatively regulated by both the Hexs-A and Hexs-B subunits using the whole size of the hydrophobic cleft as a ruler. The protein is Hexaprenyl-diphosphate synthase large subunit ((2E,6E)-farnesyl-diphosphate specific) (hexs-b) of Micrococcus luteus (Micrococcus lysodeikticus).